A 535-amino-acid chain; its full sequence is Ribonuclease Y (535 aa).

A helical membrane pass occupies residues 4–24 (IILLIVSALIGLILGYALISI). Residues 118–141 (ENLSSKEKVLDSKEQSLTDKSKHI) are disordered. The region spanning 225–285 (TITSVHLPDD…IRREIARMTL (61 aa)) is the KH domain. In terms of domain architecture, HD spans 351–444 (VLRHSVEVGK…VAAADALSSA (94 aa)).

Belongs to the RNase Y family.

It localises to the cell membrane. In terms of biological role, endoribonuclease that initiates mRNA decay. The polypeptide is Ribonuclease Y (Streptococcus pyogenes serotype M1).